We begin with the raw amino-acid sequence, 444 residues long: Phosphoglucosamine mutase (444 aa).

Ser-104 serves as the catalytic Phosphoserine intermediate. 4 residues coordinate Mg(2+): Ser-104, Asp-243, Asp-245, and Asp-247. At Ser-104 the chain carries Phosphoserine.

It belongs to the phosphohexose mutase family. Mg(2+) serves as cofactor. In terms of processing, activated by phosphorylation.

The catalysed reaction is alpha-D-glucosamine 1-phosphate = D-glucosamine 6-phosphate. In terms of biological role, catalyzes the conversion of glucosamine-6-phosphate to glucosamine-1-phosphate. The sequence is that of Phosphoglucosamine mutase from Neisseria meningitidis serogroup C / serotype 2a (strain ATCC 700532 / DSM 15464 / FAM18).